The sequence spans 198 residues: Sorcin (198 aa).

EF-hand domains lie at 45–64 (QDGQ…SGIA), 70–98 (FNLE…FKEL), 100–135 (AVLN…MGFR), and 151–169 (SGKI…LRAL). Positions 83, 85, 87, 89, 94, 113, 115, 117, 119, and 124 each coordinate Ca(2+). Position 178 is a phosphoserine (S178).

Homodimer. Interacts with GCA, RYR2 and ANXA7. As to expression, detected in cardiac myocytes.

The protein localises to the cytoplasm. It localises to the sarcoplasmic reticulum membrane. Calcium-binding protein that modulates excitation-contraction coupling in the heart. Contributes to calcium homeostasis in the heart sarcoplasmic reticulum. Modulates the activity of RYR2 calcium channels. In Mus musculus (Mouse), this protein is Sorcin (Sri).